Reading from the N-terminus, the 345-residue chain is MMRVRPVERRDLADILELAGKTGVGMTSLPQNEQHLAARIERALNTWQGSLAVGEQGYLFVLEDTEREKVVGVSAIEVAVGMNDPWYNFRVGTLVHASKTLNVYKSVPTLFLSNDHTGYSELCTLFLDPEYRKDKNGPFLSKVRFLFIAAFRQHFSRKLIAEMRGYTDEQGRSPFWENVGRHFFSIEFAKADYLSGTGQKAFIAELMPKHPLYVDFLAEEARAVIGQVHPHTAPARAVLETEGLQYQGYVDIFDGGPTLEANTDEVRAVRDSSQRKVVIDDIDIDPSGSAYLVANDRYQEFRSILINTHLSDEFLHLTPDNAAALGVVAGDVVRIISLFAPETKK.

A succinyl-CoA-binding site is contributed by Leu125. The Proton donor role is filled by His229.

This sequence belongs to the arginine N-succinyltransferase family.

The catalysed reaction is succinyl-CoA + L-arginine = N(2)-succinyl-L-arginine + CoA + H(+). Its pathway is amino-acid degradation; L-arginine degradation via AST pathway; L-glutamate and succinate from L-arginine: step 1/5. In terms of biological role, catalyzes the transfer of succinyl-CoA to arginine to produce N(2)-succinylarginine. This is Arginine N-succinyltransferase from Yersinia enterocolitica serotype O:8 / biotype 1B (strain NCTC 13174 / 8081).